The sequence spans 197 residues: Holliday junction branch migration complex subunit RuvA (197 aa).

Residues 1–63 (MISSLRGEVL…EDSMTLYGFV (63 aa)) are domain I. Positions 64–139 (DGETRDLFLT…KVGPAGSAAT (76 aa)) are domain II. Positions 139–143 (TAPAV) are flexible linker. The segment at 144–197 (NGHTVRAPVVEALVGLGFAAKQAEEATDKVLAGDGEATTSSALRAALSLLGKAR) is domain III.

Belongs to the RuvA family. Homotetramer. Forms an RuvA(8)-RuvB(12)-Holliday junction (HJ) complex. HJ DNA is sandwiched between 2 RuvA tetramers; dsDNA enters through RuvA and exits via RuvB. An RuvB hexamer assembles on each DNA strand where it exits the tetramer. Each RuvB hexamer is contacted by two RuvA subunits (via domain III) on 2 adjacent RuvB subunits; this complex drives branch migration. In the full resolvosome a probable DNA-RuvA(4)-RuvB(12)-RuvC(2) complex forms which resolves the HJ.

Its subcellular location is the cytoplasm. Functionally, the RuvA-RuvB-RuvC complex processes Holliday junction (HJ) DNA during genetic recombination and DNA repair, while the RuvA-RuvB complex plays an important role in the rescue of blocked DNA replication forks via replication fork reversal (RFR). RuvA specifically binds to HJ cruciform DNA, conferring on it an open structure. The RuvB hexamer acts as an ATP-dependent pump, pulling dsDNA into and through the RuvAB complex. HJ branch migration allows RuvC to scan DNA until it finds its consensus sequence, where it cleaves and resolves the cruciform DNA. This Mycobacterium marinum (strain ATCC BAA-535 / M) protein is Holliday junction branch migration complex subunit RuvA.